We begin with the raw amino-acid sequence, 139 residues long: Ribonuclease P protein component (139 aa).

Belongs to the RnpA family. In terms of assembly, consists of a catalytic RNA component (M1 or rnpB) and a protein subunit.

The enzyme catalyses Endonucleolytic cleavage of RNA, removing 5'-extranucleotides from tRNA precursor.. In terms of biological role, RNaseP catalyzes the removal of the 5'-leader sequence from pre-tRNA to produce the mature 5'-terminus. It can also cleave other RNA substrates such as 4.5S RNA. The protein component plays an auxiliary but essential role in vivo by binding to the 5'-leader sequence and broadening the substrate specificity of the ribozyme. The sequence is that of Ribonuclease P protein component from Chlamydia felis (strain Fe/C-56) (Chlamydophila felis).